Consider the following 142-residue polypeptide: Hemoglobin subunit alpha-A (142 aa).

Positions 2 to 142 constitute a Globin domain; that stretch reads VLSAADKGNV…VATVLTAKYR (141 aa). His59 provides a ligand contact to O2. His88 is a heme b binding site.

The protein belongs to the globin family. Heterotetramer of two alpha chains and two beta chains. In terms of tissue distribution, red blood cells.

Involved in oxygen transport from the lung to the various peripheral tissues. The sequence is that of Hemoglobin subunit alpha-A (HBAA) from Anseranas semipalmata (Magpie goose).